The following is a 265-amino-acid chain: 5'-nucleotidase SurE (265 aa).

Asp-11, Asp-12, Ser-43, and Asn-101 together coordinate a divalent metal cation.

Belongs to the SurE nucleotidase family. A divalent metal cation is required as a cofactor.

The protein localises to the cytoplasm. The enzyme catalyses a ribonucleoside 5'-phosphate + H2O = a ribonucleoside + phosphate. Its function is as follows. Nucleotidase that shows phosphatase activity on nucleoside 5'-monophosphates. The protein is 5'-nucleotidase SurE of Synechococcus sp. (strain CC9311).